Reading from the N-terminus, the 393-residue chain is Putative N(4)-(beta-N-acetylglucosaminyl)-L-asparaginase GM21137 (393 aa).

The first 23 residues, Met-1–Ala-23, serve as a signal peptide directing secretion. Disulfide bonds link Cys-97-Cys-102 and Cys-196-Cys-212. Thr-243 (nucleophile) is an active-site residue. Residues Arg-271–Asp-274 and Thr-294–Gly-297 each bind substrate. Cys-354 and Cys-381 form a disulfide bridge.

Belongs to the Ntn-hydrolase family. As to quaternary structure, heterotetramer of two alpha and two beta chains arranged as a dimer of alpha/beta heterodimers. In terms of processing, cleaved into an alpha and beta chain by autocatalysis; this activates the enzyme. The N-terminal residue of the beta subunit is responsible for the nucleophile hydrolase activity.

It catalyses the reaction N(4)-(beta-N-acetyl-D-glucosaminyl)-L-asparagine + H2O = N-acetyl-beta-D-glucosaminylamine + L-aspartate + H(+). Cleaves the GlcNAc-Asn bond which joins oligosaccharides to the peptide of asparagine-linked glycoproteins. In Drosophila sechellia (Fruit fly), this protein is Putative N(4)-(beta-N-acetylglucosaminyl)-L-asparaginase GM21137.